The chain runs to 210 residues: Glutathione S-transferase P 10 (210 aa).

The region spanning alanine 2–glycine 81 is the GST N-terminal domain. Residues tyrosine 8, tryptophan 41, lysine 45, glutamine 52–leucine 53, and glutamine 65–threonine 66 contribute to the glutathione site. In terms of domain architecture, GST C-terminal spans asparagine 83–valine 200.

Belongs to the GST superfamily. Pi family. Homodimer. In terms of tissue distribution, expressed in cells at the mouth and adjacent to the pharyngeal bulbs of the head and also in the tail.

It carries out the reaction RX + glutathione = an S-substituted glutathione + a halide anion + H(+). In terms of biological role, conjugation of reduced glutathione to a wide number of exogenous and endogenous hydrophobic electrophiles. Responsible for approximately one-third of 4-hydroxy-2-nonenal conjugation. May play a role in the detoxification of reactive oxygen species produced during pathogenic bacterial infection. The polypeptide is Glutathione S-transferase P 10 (Caenorhabditis elegans).